The chain runs to 175 residues: NADH-ubiquinone oxidoreductase chain 6 (175 aa).

A run of 6 helical transmembrane segments spans residues methionine 1–serine 21, serine 25–methionine 45, phenylalanine 47–valine 67, alanine 87–valine 107, valine 116–phenylalanine 136, and tyrosine 149–leucine 169.

Belongs to the complex I subunit 6 family. Core subunit of respiratory chain NADH dehydrogenase (Complex I) which is composed of 45 different subunits.

It localises to the mitochondrion inner membrane. It catalyses the reaction a ubiquinone + NADH + 5 H(+)(in) = a ubiquinol + NAD(+) + 4 H(+)(out). In terms of biological role, core subunit of the mitochondrial membrane respiratory chain NADH dehydrogenase (Complex I) which catalyzes electron transfer from NADH through the respiratory chain, using ubiquinone as an electron acceptor. Essential for the catalytic activity and assembly of complex I. In Ceratotherium simum (White rhinoceros), this protein is NADH-ubiquinone oxidoreductase chain 6 (MT-ND6).